Here is a 119-residue protein sequence, read N- to C-terminus: Large ribosomal subunit protein bL20 (119 aa).

This sequence belongs to the bacterial ribosomal protein bL20 family.

Functionally, binds directly to 23S ribosomal RNA and is necessary for the in vitro assembly process of the 50S ribosomal subunit. It is not involved in the protein synthesizing functions of that subunit. In Thiobacillus denitrificans (strain ATCC 25259 / T1), this protein is Large ribosomal subunit protein bL20.